The chain runs to 433 residues: L-saccharopine oxidase (433 aa).

The signal sequence occupies residues 1–18; that stretch reads MSRTIVIVGCGVFGLSTA. Asparagine 24, asparagine 119, asparagine 188, and asparagine 229 each carry an N-linked (GlcNAc...) asparagine glycan.

This sequence belongs to the MSOX/MTOX family. Monomer. The cofactor is FAD.

The protein localises to the secreted. Its subcellular location is the cytoplasm. It localises to the nucleus. The enzyme catalyses L-saccharopine + O2 + H2O = (S)-2-amino-6-oxohexanoate + L-glutamate + H2O2. This chain is L-saccharopine oxidase, found in Schizosaccharomyces pombe (strain 972 / ATCC 24843) (Fission yeast).